The primary structure comprises 65 residues: UPF0434 protein RPD_0454 (65 aa).

This sequence belongs to the UPF0434 family.

This chain is UPF0434 protein RPD_0454, found in Rhodopseudomonas palustris (strain BisB5).